A 426-amino-acid polypeptide reads, in one-letter code: Dihydroorotase (426 aa).

Positions 58 and 60 each coordinate Zn(2+). Substrate-binding positions include 60–62 (HLR) and N92. 3 residues coordinate Zn(2+): D150, H177, and H230. Residue N276 participates in substrate binding. D303 is a Zn(2+) binding site. D303 is an active-site residue. Substrate is bound by residues H307 and 321 to 322 (FG).

This sequence belongs to the metallo-dependent hydrolases superfamily. DHOase family. Class I DHOase subfamily. The cofactor is Zn(2+).

It catalyses the reaction (S)-dihydroorotate + H2O = N-carbamoyl-L-aspartate + H(+). It participates in pyrimidine metabolism; UMP biosynthesis via de novo pathway; (S)-dihydroorotate from bicarbonate: step 3/3. Its function is as follows. Catalyzes the reversible cyclization of carbamoyl aspartate to dihydroorotate. This Listeria innocua serovar 6a (strain ATCC BAA-680 / CLIP 11262) protein is Dihydroorotase.